Reading from the N-terminus, the 135-residue chain is Large ribosomal subunit protein eL32 (135 aa).

K9 is covalently cross-linked (Glycyl lysine isopeptide (Lys-Gly) (interchain with G-Cter in SUMO2)). K50 is subject to N6-succinyllysine. Phosphoserine is present on S62.

It belongs to the eukaryotic ribosomal protein eL32 family. As to quaternary structure, component of the large ribosomal subunit.

It is found in the cytoplasm. In terms of biological role, component of the large ribosomal subunit. The ribosome is a large ribonucleoprotein complex responsible for the synthesis of proteins in the cell. The sequence is that of Large ribosomal subunit protein eL32 (RPL32) from Oryctolagus cuniculus (Rabbit).